The sequence spans 343 residues: tRNA N6-adenosine threonylcarbamoyltransferase (343 aa).

Fe cation contacts are provided by H120 and H124. Substrate contacts are provided by residues 142–146, D175, G188, D192, and N281; that span reads VVSGG. Fe cation is bound at residue D310.

Belongs to the KAE1 / TsaD family. The cofactor is Fe(2+).

Its subcellular location is the cytoplasm. It catalyses the reaction L-threonylcarbamoyladenylate + adenosine(37) in tRNA = N(6)-L-threonylcarbamoyladenosine(37) in tRNA + AMP + H(+). Functionally, required for the formation of a threonylcarbamoyl group on adenosine at position 37 (t(6)A37) in tRNAs that read codons beginning with adenine. Is involved in the transfer of the threonylcarbamoyl moiety of threonylcarbamoyl-AMP (TC-AMP) to the N6 group of A37, together with TsaE and TsaB. TsaD likely plays a direct catalytic role in this reaction. The sequence is that of tRNA N6-adenosine threonylcarbamoyltransferase from Bacillus thuringiensis subsp. konkukian (strain 97-27).